We begin with the raw amino-acid sequence, 63 residues long: MFHLVDFQVTIAEILIIIMKTFRVAIWNLDILISSIVRQLFKPLTKKKYSELDDEEPMELDYP.

It belongs to the coronaviruses accessory protein 6 family.

The protein localises to the host endoplasmic reticulum membrane. The protein resides in the host Golgi apparatus membrane. Functionally, could be a determinant of virus virulence. Seems to stimulate cellular DNA synthesis in vitro. The chain is ORF6 protein from Rhinolophus macrotis (Big-eared horseshoe bat).